A 150-amino-acid polypeptide reads, in one-letter code: Peptide deformylase (150 aa).

Fe cation is bound by residues cysteine 88 and histidine 130. Residue glutamate 131 is part of the active site. Histidine 134 is a binding site for Fe cation.

Belongs to the polypeptide deformylase family. It depends on Fe(2+) as a cofactor.

The enzyme catalyses N-terminal N-formyl-L-methionyl-[peptide] + H2O = N-terminal L-methionyl-[peptide] + formate. Its function is as follows. Removes the formyl group from the N-terminal Met of newly synthesized proteins. Requires at least a dipeptide for an efficient rate of reaction. N-terminal L-methionine is a prerequisite for activity but the enzyme has broad specificity at other positions. The polypeptide is Peptide deformylase (Desulfitobacterium hafniense (strain DSM 10664 / DCB-2)).